A 603-amino-acid chain; its full sequence is Granule-bound starch synthase 1, chloroplastic/amyloplastic (603 aa).

A chloroplast-targeting transit peptide spans 1–75; that stretch reads MATITGSSMP…SEKSLGKIVC (75 aa). ADP-alpha-D-glucose is bound at residue Lys91.

The protein belongs to the glycosyltransferase 1 family. Bacterial/plant glycogen synthase subfamily. Expressed in pods and leaves. No expression in flowers or stipules.

The protein localises to the plastid. It localises to the chloroplast. The protein resides in the amyloplast. The catalysed reaction is an NDP-alpha-D-glucose + [(1-&gt;4)-alpha-D-glucosyl](n) = [(1-&gt;4)-alpha-D-glucosyl](n+1) + a ribonucleoside 5'-diphosphate + H(+). It functions in the pathway glycan biosynthesis; starch biosynthesis. In terms of biological role, may be responsible for the synthesis of amylose. This is Granule-bound starch synthase 1, chloroplastic/amyloplastic from Pisum sativum (Garden pea).